A 278-amino-acid chain; its full sequence is 4-diphosphocytidyl-2-C-methyl-D-erythritol kinase (278 aa).

K9 is a catalytic residue. 93 to 103 (PLGGGLGGGSS) serves as a coordination point for ATP. D135 is an active-site residue.

The protein belongs to the GHMP kinase family. IspE subfamily.

It carries out the reaction 4-CDP-2-C-methyl-D-erythritol + ATP = 4-CDP-2-C-methyl-D-erythritol 2-phosphate + ADP + H(+). Its pathway is isoprenoid biosynthesis; isopentenyl diphosphate biosynthesis via DXP pathway; isopentenyl diphosphate from 1-deoxy-D-xylulose 5-phosphate: step 3/6. In terms of biological role, catalyzes the phosphorylation of the position 2 hydroxy group of 4-diphosphocytidyl-2C-methyl-D-erythritol. The sequence is that of 4-diphosphocytidyl-2-C-methyl-D-erythritol kinase from Nitrosomonas eutropha (strain DSM 101675 / C91 / Nm57).